The chain runs to 224 residues: DNA mismatch repair protein MutH (224 aa).

It belongs to the MutH family.

It is found in the cytoplasm. Sequence-specific endonuclease that cleaves unmethylated GATC sequences. It is involved in DNA mismatch repair. This chain is DNA mismatch repair protein MutH, found in Shewanella amazonensis (strain ATCC BAA-1098 / SB2B).